Consider the following 162-residue polypeptide: Methyl-coenzyme M reductase II operon protein D (162 aa).

In terms of assembly, MCR is composed of three subunits: alpha, beta, and gamma. The function of protein D is not known.

The protein is Methyl-coenzyme M reductase II operon protein D (mrtD) of Methanothermobacter thermautotrophicus (strain ATCC 29096 / DSM 1053 / JCM 10044 / NBRC 100330 / Delta H) (Methanobacterium thermoautotrophicum).